The following is a 538-amino-acid chain: Putative cysteine ligase BshC (538 aa).

Positions 460-484 form a coiled coil; sequence KINEQIELLERMLKRNVEKKHEVEL.

It belongs to the BshC family.

Its function is as follows. Involved in bacillithiol (BSH) biosynthesis. May catalyze the last step of the pathway, the addition of cysteine to glucosamine malate (GlcN-Mal) to generate BSH. The protein is Putative cysteine ligase BshC of Bacillus thuringiensis subsp. konkukian (strain 97-27).